Reading from the N-terminus, the 133-residue chain is Small ribosomal subunit protein uS8 (133 aa).

This sequence belongs to the universal ribosomal protein uS8 family. Part of the 30S ribosomal subunit. Contacts proteins S5 and S12.

Its function is as follows. One of the primary rRNA binding proteins, it binds directly to 16S rRNA central domain where it helps coordinate assembly of the platform of the 30S subunit. The protein is Small ribosomal subunit protein uS8 of Deinococcus radiodurans (strain ATCC 13939 / DSM 20539 / JCM 16871 / CCUG 27074 / LMG 4051 / NBRC 15346 / NCIMB 9279 / VKM B-1422 / R1).